The primary structure comprises 458 residues: ATP synthase subunit beta (458 aa).

Gly148 to Thr155 contributes to the ATP binding site.

It belongs to the ATPase alpha/beta chains family. In terms of assembly, F-type ATPases have 2 components, CF(1) - the catalytic core - and CF(0) - the membrane proton channel. CF(1) has five subunits: alpha(3), beta(3), gamma(1), delta(1), epsilon(1). CF(0) has three main subunits: a(1), b(2) and c(9-12). The alpha and beta chains form an alternating ring which encloses part of the gamma chain. CF(1) is attached to CF(0) by a central stalk formed by the gamma and epsilon chains, while a peripheral stalk is formed by the delta and b chains.

Its subcellular location is the cell inner membrane. The enzyme catalyses ATP + H2O + 4 H(+)(in) = ADP + phosphate + 5 H(+)(out). In terms of biological role, produces ATP from ADP in the presence of a proton gradient across the membrane. The catalytic sites are hosted primarily by the beta subunits. The polypeptide is ATP synthase subunit beta (Francisella tularensis subsp. tularensis (strain FSC 198)).